Consider the following 439-residue polypeptide: Glutamyl-tRNA reductase (439 aa).

Residues 48-51 (TCNR), S107, 112-114 (EPQ), and Q118 contribute to the substrate site. The active-site Nucleophile is C49. Position 187 to 192 (187 to 192 (GAGEMA)) interacts with NADP(+).

Belongs to the glutamyl-tRNA reductase family. As to quaternary structure, homodimer.

It catalyses the reaction (S)-4-amino-5-oxopentanoate + tRNA(Glu) + NADP(+) = L-glutamyl-tRNA(Glu) + NADPH + H(+). Its pathway is porphyrin-containing compound metabolism; protoporphyrin-IX biosynthesis; 5-aminolevulinate from L-glutamyl-tRNA(Glu): step 1/2. Its function is as follows. Catalyzes the NADPH-dependent reduction of glutamyl-tRNA(Glu) to glutamate 1-semialdehyde (GSA). The sequence is that of Glutamyl-tRNA reductase from Maridesulfovibrio salexigens (strain ATCC 14822 / DSM 2638 / NCIMB 8403 / VKM B-1763) (Desulfovibrio salexigens).